We begin with the raw amino-acid sequence, 267 residues long: Hydroxyethylthiazole kinase 2 (267 aa).

M41 contributes to the substrate binding site. ATP is bound by residues K116 and T166. G193 provides a ligand contact to substrate.

The protein belongs to the Thz kinase family. Requires Mg(2+) as cofactor.

The catalysed reaction is 5-(2-hydroxyethyl)-4-methylthiazole + ATP = 4-methyl-5-(2-phosphooxyethyl)-thiazole + ADP + H(+). Its pathway is cofactor biosynthesis; thiamine diphosphate biosynthesis; 4-methyl-5-(2-phosphoethyl)-thiazole from 5-(2-hydroxyethyl)-4-methylthiazole: step 1/1. Its function is as follows. Catalyzes the phosphorylation of the hydroxyl group of 4-methyl-5-beta-hydroxyethylthiazole (THZ). In Streptococcus pneumoniae (strain Hungary19A-6), this protein is Hydroxyethylthiazole kinase 2.